The primary structure comprises 154 residues: uncharacterized protein (154 aa).

A helical transmembrane segment spans residues 23 to 43 (SAVALVTFAGAALSGVIPAIA).

It localises to the membrane. This is an uncharacterized protein from Mycobacterium tuberculosis (strain CDC 1551 / Oshkosh).